A 334-amino-acid polypeptide reads, in one-letter code: Procathepsin L (334 aa).

A signal peptide spans 1–17 (MTPLLLLAVLCLGTALA). The propeptide at 18 to 113 (TPKFDQTFNA…RLFQEPLMLQ (96 aa)) is activation peptide. Position 122 (Glu-122) interacts with Zn(2+). Cystine bridges form between Cys-135/Cys-178 and Cys-169/Cys-211. Cys-138 is an active-site residue. Positions 163, 184, 199, 205, 227, 250, 253, 273, and 275 each coordinate Zn(2+). Cysteines 269 and 322 form a disulfide. Residue His-276 is part of the active site. Positions 289–290 (DS) are excised as a propeptide. The active site involves Asn-300.

This sequence belongs to the peptidase C1 family. Dimer of a heavy and a light chain linked by disulfide bonds. Interacts with Long isoform of CD74/Ii chain; the interaction stabilizes the conformation of mature CTSL. In terms of processing, during export along the endocytic pathway, pro-CTSL undergoes several proteolytic cleavages to generate the CTSL single-chain and two-chain mature forms, composed of a heavy chain linked to a light chain by disulfide bonds. Autocleavage; produces the single-chain CTSL after cleavage of the propeptide. The cleavage can be intermolecular. As to expression, both mature cathepsin L1 and procathepsin L are found in the upper epidermis. The lower epidermis predominantly contains procathepsin L. In seminiferous tubules expression is greater at stages VI-VII than at stages IX-XII.

The protein localises to the lysosome. Its subcellular location is the apical cell membrane. It is found in the cytoplasmic vesicle. The protein resides in the secretory vesicle. It localises to the chromaffin granule. The protein localises to the secreted. Its subcellular location is the extracellular space. It carries out the reaction Specificity close to that of papain. As compared to cathepsin B, cathepsin L exhibits higher activity toward protein substrates, but has little activity on Z-Arg-Arg-NHMec, and no peptidyl-dipeptidase activity.. With respect to regulation, inhibited by the propeptide produced by autocleavage. Long isoform of CD74/Ii chain stabilizes the conformation of mature CTSL by binding to its active site and serving as a chaperone to help maintain a pool of mature enzyme in endocytic compartments and extracellular space of APCs. IFNG enhances the conversion into the CTSL mature and active form. Inhibited by CST6. Inhibited by the glycopeptide antibiotic teicoplanin. Inhibited by amantadine. In terms of biological role, thiol protease important for the overall degradation of proteins in lysosomes. Plays a critical for normal cellular functions such as general protein turnover, antigen processing and bone remodeling. Involved in the solubilization of cross-linked TG/thyroglobulin and in the subsequent release of thyroid hormone thyroxine (T4) by limited proteolysis of TG/thyroglobulin in the thyroid follicle lumen. In neuroendocrine chromaffin cells secretory vesicles, catalyzes the prohormone proenkephalin processing to the active enkephalin peptide neurotransmitter. In thymus, regulates CD4(+) T cell positive selection by generating the major histocompatibility complex class II (MHCII) bound peptide ligands presented by cortical thymic epithelial cells. Also mediates invariant chain processing in cortical thymic epithelial cells. Major elastin-degrading enzyme at neutral pH. Accumulates as a mature and active enzyme in the extracellular space of antigen presenting cells (APCs) to regulate degradation of the extracellular matrix in the course of inflammation. Secreted form generates endostatin from COL18A1. Critical for cardiac morphology and function. Plays an important role in hair follicle morphogenesis and cycling, as well as epidermal differentiation. Required for maximal stimulation of steroidogenesis by TIMP1. The polypeptide is Procathepsin L (Rattus norvegicus (Rat)).